The chain runs to 123 residues: Ribosome-binding factor A (123 aa).

This sequence belongs to the RbfA family. As to quaternary structure, monomer. Binds 30S ribosomal subunits, but not 50S ribosomal subunits or 70S ribosomes.

It localises to the cytoplasm. One of several proteins that assist in the late maturation steps of the functional core of the 30S ribosomal subunit. Associates with free 30S ribosomal subunits (but not with 30S subunits that are part of 70S ribosomes or polysomes). Required for efficient processing of 16S rRNA. May interact with the 5'-terminal helix region of 16S rRNA. The sequence is that of Ribosome-binding factor A from Magnetococcus marinus (strain ATCC BAA-1437 / JCM 17883 / MC-1).